The sequence spans 290 residues: Arylamine N-acetyltransferase 2 (290 aa).

C68 functions as the Acyl-thioester intermediate in the catalytic mechanism. Residues T103 and G104 each contribute to the CoA site. Position 106-107 (106-107 (VH)) interacts with substrate. Residues H107 and D122 contribute to the active site. Residues Y208, T214, and S287 each coordinate CoA.

It belongs to the arylamine N-acetyltransferase family.

It localises to the cytoplasm. It catalyses the reaction an arylamine + acetyl-CoA = an N-acetylarylamine + CoA. It carries out the reaction an N-hydroxyarylamine + acetyl-CoA = an N-acetoxyarylamine + CoA. Catalyzes the N- or O-acetylation of various arylamine and heterocyclic amine substrates. Participates in the detoxification of a plethora of hydrazine and arylamine drugs, and is able to bioactivate several known carcinogens. This is Arylamine N-acetyltransferase 2 (NAT2) from Homo sapiens (Human).